A 35-amino-acid chain; its full sequence is Photosystem II reaction center protein M (35 aa).

Residues I5 to L25 form a helical membrane-spanning segment.

It belongs to the PsbM family. PSII is composed of 1 copy each of membrane proteins PsbA, PsbB, PsbC, PsbD, PsbE, PsbF, PsbH, PsbI, PsbJ, PsbK, PsbL, PsbM, PsbT, PsbX, PsbY, PsbZ, Psb30/Ycf12, at least 3 peripheral proteins of the oxygen-evolving complex and a large number of cofactors. It forms dimeric complexes.

The protein localises to the plastid. It localises to the chloroplast thylakoid membrane. In terms of biological role, one of the components of the core complex of photosystem II (PSII). PSII is a light-driven water:plastoquinone oxidoreductase that uses light energy to abstract electrons from H(2)O, generating O(2) and a proton gradient subsequently used for ATP formation. It consists of a core antenna complex that captures photons, and an electron transfer chain that converts photonic excitation into a charge separation. This subunit is found at the monomer-monomer interface. The protein is Photosystem II reaction center protein M of Chara vulgaris (Common stonewort).